The primary structure comprises 368 residues: Cyclin-dependent kinase 2 (368 aa).

The 286-residue stretch at 45-330 (FCSLRRIGEG…AKGALSHRYF (286 aa)) folds into the Protein kinase domain. ATP-binding positions include 51 to 59 (IGEGTYGVV) and lysine 74. Aspartate 170 acts as the Proton acceptor in catalysis. Mg(2+) is bound by residues asparagine 175 and aspartate 188.

It belongs to the protein kinase superfamily. CMGC Ser/Thr protein kinase family. CDC2/CDKX subfamily. Interacts with cye-1; the interaction likely regulates cdk-2 activity and is probably required for gld-1 phosphorylation. Requires Mg(2+) as cofactor.

The catalysed reaction is L-seryl-[protein] + ATP = O-phospho-L-seryl-[protein] + ADP + H(+). It catalyses the reaction L-threonyl-[protein] + ATP = O-phospho-L-threonyl-[protein] + ADP + H(+). In terms of biological role, serine/threonine-protein kinase which, in association with cye-1, regulates proliferation, quiescent state and cell fate during the development of several cell lineages. In the embryo, initiates the establishment of cell polarity through the recruitment of the centrosomal proteins spd-2 and spd-5 during prophase. Phosphorylation and inhibition of the translational repressor gld-1 by the cdk-2/cye-1 complex regulates the pool of germline stem cells and the size of the mitotic zone in the gonads by preventing entry into meiosis. In Caenorhabditis elegans, this protein is Cyclin-dependent kinase 2.